Reading from the N-terminus, the 63-residue chain is Large ribosomal subunit protein uL29 (63 aa).

This sequence belongs to the universal ribosomal protein uL29 family.

This chain is Large ribosomal subunit protein uL29 (rpmC), found in Buchnera aphidicola subsp. Acyrthosiphon kondoi (Acyrthosiphon kondoi symbiotic bacterium).